We begin with the raw amino-acid sequence, 729 residues long: Phosphoribosylformylglycinamidine synthase subunit PurL (729 aa).

The active site involves His-42. Positions 45 and 84 each coordinate ATP. Glu-86 provides a ligand contact to Mg(2+). Residues 87-90 and Arg-109 contribute to the substrate site; that span reads SHNH. His-88 functions as the Proton acceptor in the catalytic mechanism. Asp-110 contacts Mg(2+). Gln-238 serves as a coordination point for substrate. Position 266 (Asp-266) interacts with Mg(2+). Residue 310-312 coordinates substrate; it reads ESQ. The ATP site is built by Asp-492 and Gly-529. Asn-530 contacts Mg(2+). Substrate is bound at residue Ser-532.

This sequence belongs to the FGAMS family. As to quaternary structure, monomer. Part of the FGAM synthase complex composed of 1 PurL, 1 PurQ and 2 PurS subunits.

It localises to the cytoplasm. The catalysed reaction is N(2)-formyl-N(1)-(5-phospho-beta-D-ribosyl)glycinamide + L-glutamine + ATP + H2O = 2-formamido-N(1)-(5-O-phospho-beta-D-ribosyl)acetamidine + L-glutamate + ADP + phosphate + H(+). Its pathway is purine metabolism; IMP biosynthesis via de novo pathway; 5-amino-1-(5-phospho-D-ribosyl)imidazole from N(2)-formyl-N(1)-(5-phospho-D-ribosyl)glycinamide: step 1/2. Functionally, part of the phosphoribosylformylglycinamidine synthase complex involved in the purines biosynthetic pathway. Catalyzes the ATP-dependent conversion of formylglycinamide ribonucleotide (FGAR) and glutamine to yield formylglycinamidine ribonucleotide (FGAM) and glutamate. The FGAM synthase complex is composed of three subunits. PurQ produces an ammonia molecule by converting glutamine to glutamate. PurL transfers the ammonia molecule to FGAR to form FGAM in an ATP-dependent manner. PurS interacts with PurQ and PurL and is thought to assist in the transfer of the ammonia molecule from PurQ to PurL. The polypeptide is Phosphoribosylformylglycinamidine synthase subunit PurL (Campylobacter concisus (strain 13826)).